The chain runs to 133 residues: MASNDTIADMLTRIRNACAVRHPTTKVPTTKMTRSIAQVLKQEGFIEDFSEAGEGVGKHLVISLKYKGKTRQPIITTLKRVSKPGLRVYSPCKDLPRVLGGIGIAIVSTSQGIMTDREARRQGVGGEVLCYIW.

This sequence belongs to the universal ribosomal protein uS8 family. Part of the 30S ribosomal subunit. Contacts proteins S5 and S12.

Functionally, one of the primary rRNA binding proteins, it binds directly to 16S rRNA central domain where it helps coordinate assembly of the platform of the 30S subunit. The protein is Small ribosomal subunit protein uS8 of Gloeothece citriformis (strain PCC 7424) (Cyanothece sp. (strain PCC 7424)).